The chain runs to 265 residues: Energy-coupling factor transporter ATP-binding protein EcfA1 (265 aa).

The ABC transporter domain occupies 2–236; the sequence is IKIKNLVFRY…KEIVELAKID (235 aa). Position 36-43 (36-43) interacts with ATP; that stretch reads GHNGSGKS.

Belongs to the ABC transporter superfamily. Energy-coupling factor EcfA family. In terms of assembly, forms a stable energy-coupling factor (ECF) transporter complex composed of 2 membrane-embedded substrate-binding proteins (S component), 2 ATP-binding proteins (A component) and 2 transmembrane proteins (T component).

The protein resides in the cell membrane. ATP-binding (A) component of a common energy-coupling factor (ECF) ABC-transporter complex. Unlike classic ABC transporters this ECF transporter provides the energy necessary to transport a number of different substrates. This Mycoplasmopsis pulmonis (strain UAB CTIP) (Mycoplasma pulmonis) protein is Energy-coupling factor transporter ATP-binding protein EcfA1.